Consider the following 185-residue polypeptide: Ribosome-recycling factor (185 aa).

Residues Ala138–Gly185 are disordered.

The protein belongs to the RRF family.

It localises to the cytoplasm. Its function is as follows. Responsible for the release of ribosomes from messenger RNA at the termination of protein biosynthesis. May increase the efficiency of translation by recycling ribosomes from one round of translation to another. This chain is Ribosome-recycling factor, found in Lactobacillus delbrueckii subsp. bulgaricus (strain ATCC BAA-365 / Lb-18).